The primary structure comprises 427 residues: Adenylosuccinate synthetase (427 aa).

GTP-binding positions include 12 to 18 (GDEGKGK) and 40 to 42 (GHT). Residue aspartate 13 is the Proton acceptor of the active site. Positions 13 and 40 each coordinate Mg(2+). IMP is bound by residues 13–16 (DEGK), 38–41 (NAGH), threonine 128, arginine 142, glutamine 223, threonine 238, and arginine 302. Catalysis depends on histidine 41, which acts as the Proton donor. 298 to 304 (VTTGRDR) contributes to the substrate binding site. Residues arginine 304, 330 to 332 (KLD), and 412 to 414 (GVG) contribute to the GTP site.

It belongs to the adenylosuccinate synthetase family. Homodimer. Mg(2+) serves as cofactor.

It is found in the cytoplasm. The catalysed reaction is IMP + L-aspartate + GTP = N(6)-(1,2-dicarboxyethyl)-AMP + GDP + phosphate + 2 H(+). The protein operates within purine metabolism; AMP biosynthesis via de novo pathway; AMP from IMP: step 1/2. Plays an important role in the de novo pathway of purine nucleotide biosynthesis. Catalyzes the first committed step in the biosynthesis of AMP from IMP. This is Adenylosuccinate synthetase from Streptomyces coelicolor (strain ATCC BAA-471 / A3(2) / M145).